The following is a 402-amino-acid chain: UPF0261 protein mll9388 (402 aa).

This sequence belongs to the UPF0261 family.

This chain is UPF0261 protein mll9388, found in Mesorhizobium japonicum (strain LMG 29417 / CECT 9101 / MAFF 303099) (Mesorhizobium loti (strain MAFF 303099)).